We begin with the raw amino-acid sequence, 262 residues long: Indole-3-glycerol phosphate synthase (262 aa).

This sequence belongs to the TrpC family.

The catalysed reaction is 1-(2-carboxyphenylamino)-1-deoxy-D-ribulose 5-phosphate + H(+) = (1S,2R)-1-C-(indol-3-yl)glycerol 3-phosphate + CO2 + H2O. It participates in amino-acid biosynthesis; L-tryptophan biosynthesis; L-tryptophan from chorismate: step 4/5. This Bordetella avium (strain 197N) protein is Indole-3-glycerol phosphate synthase.